A 361-amino-acid chain; its full sequence is Transcription factor Sox-18B (361 aa).

The interval 17–65 (VNSTWVPPADTVPEASLTPHSPPAPDSPAPSPKPGYGYSACEEKPGDPR) is disordered. Residues 36–49 (HSPPAPDSPAPSPK) are compositionally biased toward pro residues. The HMG box DNA-binding region spans 66–134 (IRRPMNAFMV…QHLQDHPNYK (69 aa)). Interaction with DNA regions lie at residues 68–81 (RPMNAFMVWAKDER) and 92–104 (HNAVLSKMLGQSW). Positions 127–163 (LQDHPNYKYRPRRKKQAKKLKRMDPSHHLRNEGYTGG) are disordered. Basic residues predominate over residues 133–147 (YKYRPRRKKQAKKLK). The interval 147-208 (KRMDPSHHLR…VLEPSEPAFF (62 aa)) is important for transcriptional activation. Positions 148-157 (RMDPSHHLRN) are enriched in basic and acidic residues. The region spanning 234-360 (KTLREISLPY…TAMYYTPCIT (127 aa)) is the Sox C-terminal domain. Residues 306–314 (NEFDQYLNM) carry the 9aaTAD motif.

Expressed in the adult spleen, lung, heart and kidney, and at a lower level in the adult testis, liver and brain.

It localises to the nucleus. Its function is as follows. Transcription factor. Binds to the consensus DNA sequence 5'-AACAAT-3'. Also binds 5'-CACAAT-3' and 5'-AATAAT-3' but with a lower affinity. Acts partially redundantly with sox7 during cardiogenesis, acting indirectly through nodal-signaling to induce mesodermal, organizer and endodermal tissues, which then interact to initiate cardiogenesis. Also acts as an antagonist of beta-catenin signaling. The protein is Transcription factor Sox-18B (sox18-b) of Xenopus laevis (African clawed frog).